The primary structure comprises 216 residues: Ribosomal RNA small subunit methyltransferase G (216 aa).

Residues Gly83, Met88, 134-135 (VE), and Arg149 contribute to the S-adenosyl-L-methionine site.

This sequence belongs to the methyltransferase superfamily. RNA methyltransferase RsmG family.

The protein resides in the cytoplasm. The catalysed reaction is guanosine(527) in 16S rRNA + S-adenosyl-L-methionine = N(7)-methylguanosine(527) in 16S rRNA + S-adenosyl-L-homocysteine. Functionally, specifically methylates the N7 position of guanine in position 527 of 16S rRNA. The chain is Ribosomal RNA small subunit methyltransferase G from Pseudomonas entomophila (strain L48).